Reading from the N-terminus, the 199-residue chain is uncharacterized protein (199 aa).

Residues 1-48 (MSANEFYSSGQQGQYNQQNNQERTGAPNNGQYGADNGNPNGERGLFST) are disordered. Position 2 is an N-acetylserine (serine 2). Over residues 7–21 (YSSGQQGQYNQQNNQ) the composition is skewed to low complexity. Polar residues predominate over residues 22–31 (ERTGAPNNGQ). Serine 53 and serine 70 each carry phosphoserine. The disordered stretch occupies residues 89 to 199 (RKEHKQQEQY…RQGFNGGSRW (111 aa)). Gly residues-rich tracts occupy residues 124 to 163 (GGFG…GFGG), 170 to 179 (GGPGGQGFGG), and 186 to 199 (GGQG…GSRW).

It localises to the mitochondrion. This is an uncharacterized protein from Saccharomyces cerevisiae (strain ATCC 204508 / S288c) (Baker's yeast).